The following is a 580-amino-acid chain: Putative ankyrin repeat protein L63 (580 aa).

14 ANK repeats span residues 81 to 110, 111 to 140, 141 to 170, 172 to 200, 202 to 230, 314 to 339, 340 to 369, 370 to 399, 400 to 429, 431 to 459, 461 to 489, 490 to 519, 521 to 549, and 551 to 579; these read SLNRHFKMSCEKGQYTIVTYLVALGADFRI, DNDYGLIHAAKNGHIGVVKYLVSKGVNIGA, NDNCAIKFASENGHLEVVEYLVSKGADINA, NNYPIEMASKNGHLKVVEYLVSLGVDIRA, DDYVVGLAYYYDHHEVVDYLVSQGAVLNK, SLDDYLVKSCCEGDLSIIKDLILLGA, SERKAVMLACQNGHLEIIRYFVSQGFNIKC, GSNCAVTIASENGHIEVVRYLISLGADINS, GNNYAIKYASENGHLEVVKYLVDQGANIRA, NDRAVRFASRKGHLEVVKYLVSKGANIRA, DDRAVTLASQNGHLEVVKYLVSQGTDIKA, GDDYAVRWASRNGHLEVVKYLISQGANIKA, DDYAVRWASLNGHLEVVKFLVNQNADIRA, and NNYAVRWAHKNKHFDVVEYLISQGAVINP.

This chain is Putative ankyrin repeat protein L63, found in Acanthamoeba polyphaga (Amoeba).